The primary structure comprises 1169 residues: Phospholipid-transporting ATPase IF (1169 aa).

Residues 1 to 47 (LGFDPPHQSDTRTIYIANRFPQNGLYTPQKFIDNRIISSKYTVWNFV) are Cytoplasmic-facing. Residues 48–69 (PKNLFEQFRRVANFYFLIIFLV) form a helical membrane-spanning segment. Topologically, residues 70–74 (QLMID) are extracellular. A helical membrane pass occupies residues 75–96 (TPTSPITSGLPLFFVITVTAIK). Residues 97-281 (QGYEDWLRHN…SAVEKSMNTF (185 aa)) lie on the Cytoplasmic side of the membrane. The helical transmembrane segment at 282-303 (LIIYLIILISEAIISTILKYTW) threads the bilayer. Residues 304-333 (QAEEKWDEPWYNQKTEHQRNSSKILRFISD) lie on the Extracellular side of the membrane. The helical transmembrane segment at 334–351 (FLAFLVLYNFIIPISLYV) threads the bilayer. Residues 352-868 (TVEMQKFLGS…HGHFYYIRIA (517 aa)) are Cytoplasmic-facing. Residue Asp-399 is the 4-aspartylphosphate intermediate of the active site. Residues Asp-399, Lys-400, Thr-401, Glu-523, Phe-564, Lys-587, Arg-618, Thr-698, Gly-699, Asp-700, Arg-786, and Lys-792 each contribute to the ATP site. Residue Asp-399 coordinates Mg(2+). Residue Thr-401 coordinates Mg(2+). Residues 794–802 (KVIRLIKIS) are required for binding to the RING-finger of HLTF. Asp-813 contributes to the Mg(2+) binding site. ATP contacts are provided by Asn-816 and Asp-817. Asp-817 contacts Mg(2+). The helical transmembrane segment at 869-890 (TLVQYFFYKNVCFITPQFLYQF) threads the bilayer. At 891 to 902 (YCLFSQQTLYDS) the chain is on the extracellular side. A helical transmembrane segment spans residues 903–922 (VYLTLYNICFTSLPILIYSL). The Cytoplasmic segment spans residues 923 to 952 (LEQHIDPHILQNKPTLYRDISKNRLLSIKT). The helical transmembrane segment at 953–974 (FLYWTILGFSRSFIFLFGSYFL) threads the bilayer. At 975–989 (IGKDASLLGNGQMFG) the chain is on the extracellular side. The helical transmembrane segment at 990–1012 (NWTFGTLVFTVMVITVTVKMALE) threads the bilayer. At 1013–1017 (THFWT) the chain is on the cytoplasmic side. Residues 1018–1039 (WINHLVTWGSIIFYFVFSLFYG) traverse the membrane as a helical segment. Over 1040–1057 (GILWPFLGSQNMYFVFIQ) the chain is Extracellular. The chain crosses the membrane as a helical span at residues 1058 to 1082 (LVSSGSAWFAIILMVVTCLFLDVMK). Topologically, residues 1083–1169 (KVFDRQLHPT…TLSTMDSSTC (87 aa)) are cytoplasmic. Ser-1146 carries the phosphoserine modification.

Belongs to the cation transport ATPase (P-type) (TC 3.A.3) family. Type IV subfamily. In terms of assembly, component of a P4-ATPase flippase complex which consists of a catalytic alpha subunit ATP11B and an accessory beta subunit TMEM30A. As to quaternary structure, interacts with HLTF (via the RING-finger). Mg(2+) is required as a cofactor. As to expression, ubiquitously expressed.

It localises to the recycling endosome membrane. It is found in the early endosome. The protein localises to the endoplasmic reticulum. The protein resides in the golgi apparatus. Its subcellular location is the trans-Golgi network. It localises to the nucleus inner membrane. The enzyme catalyses ATP + H2O + phospholipidSide 1 = ADP + phosphate + phospholipidSide 2.. The catalysed reaction is a 1,2-diacyl-sn-glycero-3-phospho-L-serine(out) + ATP + H2O = a 1,2-diacyl-sn-glycero-3-phospho-L-serine(in) + ADP + phosphate + H(+). It catalyses the reaction a 1,2-diacyl-sn-glycero-3-phosphoethanolamine(out) + ATP + H2O = a 1,2-diacyl-sn-glycero-3-phosphoethanolamine(in) + ADP + phosphate + H(+). Functionally, catalytic component of a P4-ATPase flippase complex which catalyzes the hydrolysis of ATP coupled to the transport of aminophospholipids, phosphatidylserines (PS) and phosphatidylethanolamines (PE), from the outer to the inner leaflet of intracellular membranes. May contribute to the maintenance of membrane lipid asymmetry in endosome compartment. Its function is as follows. Appears to play a role in the subnuclear trafficking of transcription factors with RING motifs. This Oryctolagus cuniculus (Rabbit) protein is Phospholipid-transporting ATPase IF (ATP11B).